Reading from the N-terminus, the 1381-residue chain is DNA-directed RNA polymerase subunit beta' (1381 aa).

Residues Cys70, Cys72, Cys85, and Cys88 each contribute to the Zn(2+) site. Mg(2+)-binding residues include Asp461, Asp463, and Asp465. Positions 801, 875, 882, and 885 each coordinate Zn(2+). Positions 1362-1381 (VEIEGDENSNKKSLDMHAAN) are disordered. A compositionally biased stretch (basic and acidic residues) spans 1369–1381 (NSNKKSLDMHAAN).

It belongs to the RNA polymerase beta' chain family. In terms of assembly, the RNAP catalytic core consists of 2 alpha, 1 beta, 1 beta' and 1 omega subunit. When a sigma factor is associated with the core the holoenzyme is formed, which can initiate transcription. It depends on Mg(2+) as a cofactor. Zn(2+) serves as cofactor.

The catalysed reaction is RNA(n) + a ribonucleoside 5'-triphosphate = RNA(n+1) + diphosphate. Its function is as follows. DNA-dependent RNA polymerase catalyzes the transcription of DNA into RNA using the four ribonucleoside triphosphates as substrates. The protein is DNA-directed RNA polymerase subunit beta' of Syntrophus aciditrophicus (strain SB).